The following is a 617-amino-acid chain: MATTINPPRDPNTLSNYNNWLSTHITANFDILFDQKKLVGNVIHKLKSITNAESTDIVLDTSHVDVTDVKVDGKPSVWELLPPVKPYGTALKIKLDQGVKMDEIVHVDISVKTTEKCTALQWLTPAQTSNKKHPYMFSQCQAIHARSIFPCQDTPDVKSTIDFNITSPLPVIASGLLVRDASGAPQTGGKNLYQFHQKVPIPSYLFALASGDISEAAIGPRSVVATSPDKLRECQWELEADTENFINAIEKIVYPYVWGEYNVLILPPSFPYGGMENPIFTFATPSIISKDRENVDVIAHELAHSWSGNLVTNASWEHFWLNEGWTVYLERRILAAVHGEAYRHFSAIIGWKALSDSVDHFGHDHEFTRLITDLKGKDPDDAFSSIPYEKGFNFLFHLENLVGKQKFDQFIPHYFTKFKGKSLDSYEFKATILDFFKSDAEASKLLNELDWDTWFYAPGLPPKPKFDTSLVDVVYDLAKKWQSIPESSFKPQPSDIKDLTGNQIVVFLEQVLLFERPLAPELSKLMGEVYGLAKSANIEVANLYFRVGLNAGDESVFEPTADLLGKIGRMKFVRPLYRNLQKVNRPLAIETFEKNKDFYHPICRAMVEKDLFGKKDA.

A peptide-binding positions include 139-141 and 271-276; these read QCQ and PYGGME. H300 contributes to the Zn(2+) binding site. Catalysis depends on E301, which acts as the Proton acceptor. The Zn(2+) site is built by H304 and E323. Residue Y388 is the Proton donor of the active site.

The protein belongs to the peptidase M1 family. The cofactor is Zn(2+).

The protein localises to the cytoplasm. It localises to the nucleus. It carries out the reaction an epoxide + H2O = an ethanediol. Aminopeptidase that preferentially cleaves di- and tripeptides. Also has low epoxide hydrolase activity (in vitro). Can hydrolyze the epoxide leukotriene LTA(4) but it forms preferentially 5,6-dihydroxy-7,9,11,14-eicosatetraenoic acid rather than the cytokine leukotriene B(4) as the product compared to the homologous mammalian enzyme (in vitro). The protein is Leucine aminopeptidase 2 of Aspergillus terreus (strain NIH 2624 / FGSC A1156).